A 35-amino-acid polypeptide reads, in one-letter code: Probable L,D-transpeptidase ErfK/SrfK (35 aa).

Positions 1–21 are cleaved as a signal peptide; that stretch reads MRRVKLLCTALMLLASHGALA.

This sequence belongs to the YkuD family.

The protein resides in the periplasm. The protein operates within cell wall biogenesis; peptidoglycan biosynthesis. This chain is Probable L,D-transpeptidase ErfK/SrfK (erfK), found in Klebsiella aerogenes (Enterobacter aerogenes).